The chain runs to 181 residues: NADH-quinone oxidoreductase subunit I (181 aa).

4Fe-4S ferredoxin-type domains follow at residues 51-80 (TRNSNGSERCVACNLCSAVCPVNCISLKKS) and 90-119 (KSFQINLSRCIFCGLCEEACPTMAIQLTPD). [4Fe-4S] cluster is bound by residues C60, C63, C66, C70, C99, C102, C105, and C109.

The protein belongs to the complex I 23 kDa subunit family. In terms of assembly, NDH-1 is composed of 13 different subunits. Subunits NuoA, H, J, K, L, M, N constitute the membrane sector of the complex. [4Fe-4S] cluster is required as a cofactor.

It is found in the cell membrane. The catalysed reaction is a quinone + NADH + 5 H(+)(in) = a quinol + NAD(+) + 4 H(+)(out). NDH-1 shuttles electrons from NADH, via FMN and iron-sulfur (Fe-S) centers, to quinones in the respiratory chain. The immediate electron acceptor for the enzyme in this species is believed to be ubiquinone. Couples the redox reaction to proton translocation (for every two electrons transferred, four hydrogen ions are translocated across the cytoplasmic membrane), and thus conserves the redox energy in a proton gradient. In Buchnera aphidicola subsp. Cinara cedri (strain Cc), this protein is NADH-quinone oxidoreductase subunit I.